We begin with the raw amino-acid sequence, 91 residues long: Mercuric transport protein periplasmic component (91 aa).

The first 19 residues, 1 to 19 (MKKLLSALALAAVVAPVWA), serve as a signal peptide directing secretion. One can recognise an HMA domain in the interval 22 to 88 (QTVTLSVPGM…ATEDAGYPSS (67 aa)). Cys33 and Cys36 together coordinate Hg(2+).

Belongs to the MerP family. Monomer.

The protein localises to the periplasm. Involved in mercury resistance. Acts as a mercury scavenger that specifically binds to a mercuric ion in the periplasm and probably passes it to the cytoplasmic mercuric reductase MerA via the mercuric transport protein MerT. This is Mercuric transport protein periplasmic component from Pseudomonas fluorescens.